The primary structure comprises 328 residues: Integrator complex subunit 12 (328 aa).

Residues 1–45 (MAANIAAAAAAAQEVDPVLKKAIKLLHSSNPTSAAELRLLLDEAL) form a sufficient for binding to IntS1 and IntS9 and for 3'-end snRNA processing region. A PHD-type zinc finger spans residues 128–185 (DLNCCVCGEMVFTATNRLIECSKCGAMYHQECHKPPITKEEAADDQEQNWQCDTCCNK). Low complexity-rich tracts occupy residues 215-233 (KAKS…NSSS), 241-264 (SSST…SSSS), 274-283 (KSTAASSLSA), and 292-311 (SSGT…SKSS). The segment at 215-328 (KAKSSVASSR…GSSSKRRSKQ (114 aa)) is disordered.

The protein belongs to the Integrator subunit 12 family. In terms of assembly, belongs to the multiprotein complex Integrator, at least composed of IntS1, IntS2, IntS3, IntS4, omd/IntS5, IntS6, defl/IntS7, IntS8, IntS9, IntS10, IntS11, IntS12, asun/IntS13, IntS14 and IntS15. The core complex associates with protein phosphatase 2A subunits mts/PP2A and Pp2A-29B, to form the Integrator-PP2A (INTAC) complex. Within the complex, interacts with IntS1 and IntS9. Interaction with IntS1 is likely to be important for promoting 3'-end processing of snRNAs.

It is found in the nucleus. Component of the integrator complex, a multiprotein complex that terminates RNA polymerase II (Pol II) transcription in the promoter-proximal region of genes. The integrator complex provides a quality checkpoint during transcription elongation by driving premature transcription termination of transcripts that are unfavorably configured for transcriptional elongation: the complex terminates transcription by (1) catalyzing dephosphorylation of the C-terminal domain (CTD) of Pol II subunit Polr2A/Rbp1 and Spt5, and (2) degrading the exiting nascent RNA transcript via endonuclease activity. The integrator complex is also involved in the 3'-end processing of the U7 snRNA, and also the spliceosomal snRNAs U1, U2, U4 and U5. Required for the normal expression of the Integrator complex component IntS1. The polypeptide is Integrator complex subunit 12 (Drosophila melanogaster (Fruit fly)).